The primary structure comprises 603 residues: Probable methyltransferase PMT20 (603 aa).

The Cytoplasmic portion of the chain corresponds to 1-16 (MKSGKQSSQPEKGTSR). A helical; Signal-anchor for type II membrane protein membrane pass occupies residues 17-37 (ILSLTVLFIAFCGFSFYLGGI). Residues 38-603 (FCSERDKIVA…KLWFSSNQTS (566 aa)) are Lumenal-facing. N-linked (GlcNAc...) asparagine glycosylation is found at Asn313 and Asn600.

It belongs to the methyltransferase superfamily.

It is found in the golgi apparatus membrane. In Arabidopsis thaliana (Mouse-ear cress), this protein is Probable methyltransferase PMT20.